An 828-amino-acid polypeptide reads, in one-letter code: MKMTRRAFVKANAAASAAAVAGITLPASAANLIVSSDETKIKWDKAPCRFCGTGCSVLVGTQNGRVVATQGDPEAPVNKGLNCIKGYFLSKIMYGKDRLQTPMLRMKNGEYNKEGDFAPVSWDQAFDVMAEKFKKALKEKGPTSVGMFGSGQWTVMEGYAASKMMKAGFRSNNIDPNARHCMASAVGGFMRTFGIDEPMGCYDDFEHADSFVLWGSNMAEMHPVLWTRITDRRLSHPHVKVNVLSTYYHRSFELADNGMIFEPQTDLAIANFIANYIIQNDAVNWDFVTKHTHFKRAETDIGYGLRDDNPLQMKAKHPNSGALHPMDFEQYKASVAEYTVEKASQMSGVSEEKLIEMAKQYADPKVKVMSLWTMGMNQHTRGVWMNSLVYNIHLLTGKISQPGNSPFSLTGQPSACGTAREVGTFSHRLPADMVVANPKHRAIAEKIWKLPDGTIPAKPGYHAVQQDRMLKDGKLNAYWVMCNNNMQAGPNINEERLPGYRNPENFIVCSDPYPTVTAQASDLILPTAMWVEKEGAYGNAERRTQAWYQQVKSQGDSKSDLWQLMEFSKRFKIEEVWGEDLLAQMPEYRGKTMYEVLFRNGQVDKFPLSEAQELNDDAKAQGFYLQKGLFEEYAAFGRGHGHDLAPYDVYHQVRGLRWPVVDGKETLWRFVEGSDPYVPEGEGFRFYGKPDGKANIIFAPFEPAPEEPDQEYDMWLCTGRVLEHWHTGTMTRRVPELYKAVPDALCFIHPDDAQKRGLRRGDEVLLESRRGEVRCRVETRGRNRPPVGLVFVPFFDARVLVNKLILDATDPLSKQTDYKKCPIKITKV.

Residues 1–30 (MKMTRRAFVKANAAASAAAVAGITLPASAA) constitute a signal peptide (tat-type signal). One can recognise a 4Fe-4S Mo/W bis-MGD-type domain in the interval 41 to 97 (IKWDKAPCRFCGTGCSVLVGTQNGRVVATQGDPEAPVNKGLNCIKGYFLSKIMYGKD). [4Fe-4S] cluster contacts are provided by Cys48, Cys51, Cys55, and Cys83. Mo-bis(molybdopterin guanine dinucleotide)-binding positions include Lys85, Gln152, Asn177, Cys181, 214-221 (WGSNMAEM), 245-249 (STYYH), 264-266 (QTD), Met374, Gln378, Asn484, 510-511 (SD), Lys533, Asp560, and 718-727 (TGRVLEHWHT). Phe794 provides a ligand contact to substrate. Residues Asn802 and Lys819 each coordinate Mo-bis(molybdopterin guanine dinucleotide).

The protein belongs to the prokaryotic molybdopterin-containing oxidoreductase family. NasA/NapA/NarB subfamily. Component of the periplasmic nitrate reductase NapAB complex composed of NapA and NapB. [4Fe-4S] cluster is required as a cofactor. Requires Mo-bis(molybdopterin guanine dinucleotide) as cofactor. Predicted to be exported by the Tat system. The position of the signal peptide cleavage has not been experimentally proven.

The protein resides in the periplasm. It catalyses the reaction 2 Fe(II)-[cytochrome] + nitrate + 2 H(+) = 2 Fe(III)-[cytochrome] + nitrite + H2O. In terms of biological role, catalytic subunit of the periplasmic nitrate reductase complex NapAB. Receives electrons from NapB and catalyzes the reduction of nitrate to nitrite. The sequence is that of Periplasmic nitrate reductase 1 from Photobacterium profundum (strain SS9).